Here is a 256-residue protein sequence, read N- to C-terminus: Catechol O-methyltransferase A (256 aa).

An N-terminal signal peptide occupies residues 1–27 (MLWVVLAVVVVLASVLVLLRQSSGLLA). N-linked (GlcNAc...) asparagine glycosylation is present at N58. S-adenosyl-L-methionine is bound by residues V84, S114, E132, and D183. A Mg(2+)-binding site is contributed by D183. K186 provides a ligand contact to substrate. D211 and N212 together coordinate Mg(2+). 2 residues coordinate substrate: N212 and E241.

Belongs to the class I-like SAM-binding methyltransferase superfamily. Cation-dependent O-methyltransferase family. The cofactor is Mg(2+). In terms of tissue distribution, widely expressed. Has higher expression in females compared to males. Strongly expressed in liver and diencephalon. Expressed at lower levels in hindbrain, spinal cord, eye, telencephalon, spleen, gut, gill and muscle. Detected in ovary and testis. In eye, detected in all layers of the retina with highest expression in the inner nuclear layer. In gut, expressed in the lamina propria but has little or no expression in gut epithelium. In brain, has strongest expression near the midline of the telencephalon, in the periventricular gray zone of the optic tectum, in the preglomerular nucleus, and near the walls of the diencephalic ventricle.

It localises to the secreted. It catalyses the reaction a catechol + S-adenosyl-L-methionine = a guaiacol + S-adenosyl-L-homocysteine + H(+). Its function is as follows. Catalyzes the O-methylation, and thereby the inactivation, of catecholamine neurotransmitters and catechol hormones. Shows highest activity towards catecholestrogens and dobutamine. Also has lower activity towards L-DOPA, dopamine and epinephrine. Active towards the xenobiotic compounds methyl-DOPA, carbidopa, isoproterenol, and apomorphine. The protein is Catechol O-methyltransferase A of Danio rerio (Zebrafish).